Reading from the N-terminus, the 225-residue chain is uncharacterized protein (225 aa).

A helical membrane pass occupies residues 12 to 32; that stretch reads AGFMMIFVFVIASFLLVLLFF.

Its subcellular location is the cell membrane. This is an uncharacterized protein from Bacillus subtilis (strain 168).